The sequence spans 215 residues: TLD domain-containing protein 2 (215 aa).

Residues 1–46 (MRGLRWRYTRLPSQVEDTLSGEEGNEEEEEEEAAPDPAAAPEDPTV) are disordered. A compositionally biased stretch (acidic residues) spans 19-34 (LSGEEGNEEEEEEEAA). Residues 54 to 215 (QVLSASEIRQ…IQELEAWLLS (162 aa)) enclose the TLDc domain.

This sequence belongs to the OXR1 family.

This Homo sapiens (Human) protein is TLD domain-containing protein 2 (TLDC2).